The chain runs to 238 residues: Cysteine-rich venom protein pseudechetoxin-like (238 aa).

Residues 1–19 form the signal peptide; that stretch reads MIAFIVLLSLAAVLQQSSG. A propeptide spanning residues 20 to 28 is cleaved from the precursor; the sequence is TVDFASESS. The SCP domain maps to 38 to 164; it reads VDKHNALRRS…STKYLYVCQY (127 aa). Cystine bridges form between Cys75–Cys153, Cys92–Cys165, Cys148–Cys162, Cys184–Cys191, Cys187–Cys196, Cys200–Cys233, Cys209–Cys227, and Cys218–Cys231. One can recognise a ShKT domain in the interval 200-233; that stretch reads CKHEDDFSNCKALAKNSKCQTAWIKSKCPATCFC.

It belongs to the CRISP family. As to expression, expressed by the venom gland.

It localises to the secreted. Its function is as follows. Blocks olfactory (CNGA2) and retinal (CNGA1) CNG channel currents. Does not affect neither depolarization- nor caffeine-induced contraction of smooth muscle. The protein is Cysteine-rich venom protein pseudechetoxin-like of Hoplocephalus stephensii (Stephens's banded snake).